A 126-amino-acid polypeptide reads, in one-letter code: S-adenosylmethionine decarboxylase proenzyme (126 aa).

The active-site Schiff-base intermediate with substrate; via pyruvic acid is S63. Position 63 is a pyruvic acid (Ser); by autocatalysis (S63). Catalysis depends on H68, which acts as the Proton acceptor; for processing activity. C83 functions as the Proton donor; for catalytic activity in the catalytic mechanism.

Belongs to the prokaryotic AdoMetDC family. Type 1 subfamily. In terms of assembly, heterotetramer of two alpha and two beta chains arranged as a dimer of alpha/beta heterodimers. Pyruvate is required as a cofactor. Is synthesized initially as an inactive proenzyme. Formation of the active enzyme involves a self-maturation process in which the active site pyruvoyl group is generated from an internal serine residue via an autocatalytic post-translational modification. Two non-identical subunits are generated from the proenzyme in this reaction, and the pyruvate is formed at the N-terminus of the alpha chain, which is derived from the carboxyl end of the proenzyme. The post-translation cleavage follows an unusual pathway, termed non-hydrolytic serinolysis, in which the side chain hydroxyl group of the serine supplies its oxygen atom to form the C-terminus of the beta chain, while the remainder of the serine residue undergoes an oxidative deamination to produce ammonia and the pyruvoyl group blocking the N-terminus of the alpha chain.

It carries out the reaction S-adenosyl-L-methionine + H(+) = S-adenosyl 3-(methylsulfanyl)propylamine + CO2. It participates in amine and polyamine biosynthesis; S-adenosylmethioninamine biosynthesis; S-adenosylmethioninamine from S-adenosyl-L-methionine: step 1/1. In terms of biological role, catalyzes the decarboxylation of S-adenosylmethionine to S-adenosylmethioninamine (dcAdoMet), the propylamine donor required for the synthesis of the polyamines spermine and spermidine from the diamine putrescine. This Clostridium tetani (strain Massachusetts / E88) protein is S-adenosylmethionine decarboxylase proenzyme.